We begin with the raw amino-acid sequence, 86 residues long: UPF0180 protein CA_C1486 (86 aa).

The protein belongs to the UPF0180 family.

This chain is UPF0180 protein CA_C1486, found in Clostridium acetobutylicum (strain ATCC 824 / DSM 792 / JCM 1419 / IAM 19013 / LMG 5710 / NBRC 13948 / NRRL B-527 / VKM B-1787 / 2291 / W).